The sequence spans 487 residues: Protein nucleotidyltransferase YdiU (487 aa).

Residues Gly90, Gly92, Arg93, Lys113, Asp125, Gly126, Arg176, and Arg183 each contribute to the ATP site. Residue Asp252 is the Proton acceptor of the active site. Mg(2+)-binding residues include Asn253 and Asp262. An ATP-binding site is contributed by Asp262.

It belongs to the SELO family. Mg(2+) serves as cofactor. Mn(2+) is required as a cofactor.

The catalysed reaction is L-seryl-[protein] + ATP = 3-O-(5'-adenylyl)-L-seryl-[protein] + diphosphate. It carries out the reaction L-threonyl-[protein] + ATP = 3-O-(5'-adenylyl)-L-threonyl-[protein] + diphosphate. The enzyme catalyses L-tyrosyl-[protein] + ATP = O-(5'-adenylyl)-L-tyrosyl-[protein] + diphosphate. It catalyses the reaction L-histidyl-[protein] + UTP = N(tele)-(5'-uridylyl)-L-histidyl-[protein] + diphosphate. The catalysed reaction is L-seryl-[protein] + UTP = O-(5'-uridylyl)-L-seryl-[protein] + diphosphate. It carries out the reaction L-tyrosyl-[protein] + UTP = O-(5'-uridylyl)-L-tyrosyl-[protein] + diphosphate. In terms of biological role, nucleotidyltransferase involved in the post-translational modification of proteins. It can catalyze the addition of adenosine monophosphate (AMP) or uridine monophosphate (UMP) to a protein, resulting in modifications known as AMPylation and UMPylation. The polypeptide is Protein nucleotidyltransferase YdiU (Pseudomonas syringae pv. syringae (strain B728a)).